The following is a 313-amino-acid chain: Acetyl-coenzyme A carboxylase carboxyl transferase subunit beta, chloroplastic (313 aa).

The 267-residue stretch at 47 to 313 (LWTRCDNCEN…SAPCRRSNNS (267 aa)) folds into the CoA carboxyltransferase N-terminal domain. Zn(2+)-binding residues include C51, C54, C70, and C73. The segment at 51-73 (CDNCENMLYIRFLRQNKRICEEC) adopts a C4-type zinc-finger fold.

This sequence belongs to the AccD/PCCB family. As to quaternary structure, acetyl-CoA carboxylase is a heterohexamer composed of biotin carboxyl carrier protein, biotin carboxylase and 2 subunits each of ACCase subunit alpha and ACCase plastid-coded subunit beta (accD). Requires Zn(2+) as cofactor.

It is found in the plastid. The protein resides in the chloroplast stroma. The catalysed reaction is N(6)-carboxybiotinyl-L-lysyl-[protein] + acetyl-CoA = N(6)-biotinyl-L-lysyl-[protein] + malonyl-CoA. It functions in the pathway lipid metabolism; malonyl-CoA biosynthesis; malonyl-CoA from acetyl-CoA: step 1/1. In terms of biological role, component of the acetyl coenzyme A carboxylase (ACC) complex. Biotin carboxylase (BC) catalyzes the carboxylation of biotin on its carrier protein (BCCP) and then the CO(2) group is transferred by the transcarboxylase to acetyl-CoA to form malonyl-CoA. The sequence is that of Acetyl-coenzyme A carboxylase carboxyl transferase subunit beta, chloroplastic from Anthoceros angustus (Hornwort).